A 105-amino-acid polypeptide reads, in one-letter code: DNA-binding protein HU (105 aa).

This sequence belongs to the bacterial histone-like protein family.

Histone-like DNA-binding protein which is capable of wrapping DNA to stabilize it, and thus to prevent its denaturation under extreme environmental conditions. In Treponema pallidum (strain Nichols), this protein is DNA-binding protein HU (hup).